A 962-amino-acid chain; its full sequence is Glycine dehydrogenase (decarboxylating) (962 aa).

The residue at position 709 (Lys709) is an N6-(pyridoxal phosphate)lysine.

It belongs to the GcvP family. In terms of assembly, the glycine cleavage system is composed of four proteins: P, T, L and H. Pyridoxal 5'-phosphate is required as a cofactor.

It carries out the reaction N(6)-[(R)-lipoyl]-L-lysyl-[glycine-cleavage complex H protein] + glycine + H(+) = N(6)-[(R)-S(8)-aminomethyldihydrolipoyl]-L-lysyl-[glycine-cleavage complex H protein] + CO2. The glycine cleavage system catalyzes the degradation of glycine. The P protein binds the alpha-amino group of glycine through its pyridoxal phosphate cofactor; CO(2) is released and the remaining methylamine moiety is then transferred to the lipoamide cofactor of the H protein. This is Glycine dehydrogenase (decarboxylating) from Shewanella putrefaciens (strain CN-32 / ATCC BAA-453).